The chain runs to 326 residues: Aspartate carbamoyltransferase catalytic subunit (326 aa).

Residues Arg76 and Thr77 each coordinate carbamoyl phosphate. Lys104 is a binding site for L-aspartate. Residues Arg126, His156, and Gln159 each coordinate carbamoyl phosphate. The L-aspartate site is built by Arg189 and Arg244. Residues Gly285 and Pro286 each coordinate carbamoyl phosphate.

The protein belongs to the aspartate/ornithine carbamoyltransferase superfamily. ATCase family. In terms of assembly, heterododecamer (2C3:3R2) of six catalytic PyrB chains organized as two trimers (C3), and six regulatory PyrI chains organized as three dimers (R2).

The enzyme catalyses carbamoyl phosphate + L-aspartate = N-carbamoyl-L-aspartate + phosphate + H(+). It functions in the pathway pyrimidine metabolism; UMP biosynthesis via de novo pathway; (S)-dihydroorotate from bicarbonate: step 2/3. Functionally, catalyzes the condensation of carbamoyl phosphate and aspartate to form carbamoyl aspartate and inorganic phosphate, the committed step in the de novo pyrimidine nucleotide biosynthesis pathway. The chain is Aspartate carbamoyltransferase catalytic subunit from Polynucleobacter asymbioticus (strain DSM 18221 / CIP 109841 / QLW-P1DMWA-1) (Polynucleobacter necessarius subsp. asymbioticus).